Reading from the N-terminus, the 932-residue chain is Protocadherin gamma-A9 (932 aa).

The first 28 residues, 1-28 (MAAPTKCQLRGRLVLLCSLLGMLWEARA), serve as a signal peptide directing secretion. Cadherin domains follow at residues 29 to 133 (SQIR…APKF), 134 to 242 (QAES…APVF), 243 to 347 (AQRI…RPEV), 348 to 452 (TITS…PPAF), 453 to 562 (SQAS…APEI), and 570 to 683 (DGST…IPAD). Residues 29–692 (SQIRYSVPEE…DLEASDLTLY (664 aa)) are Extracellular-facing. Residues asparagine 47 and asparagine 127 are each glycosylated (N-linked (GlcNAc...) asparagine). Asparagine 389, asparagine 419, and asparagine 545 each carry an N-linked (GlcNAc...) asparagine glycan. The chain crosses the membrane as a helical span at residues 693–713 (LVVAVAVVSCVFLTFVITLLA). At 714-932 (LRLRHWHSSH…KKKSGKKEKK (219 aa)) the chain is on the cytoplasmic side. Disordered stretches follow at residues 803-841 (DTPL…WPNN) and 902-932 (ATLT…KEKK). The span at 816–841 (WRFSQAQRPGTSGSQNGDDTGTWPNN) shows a compositional bias: polar residues. A compositionally biased stretch (basic residues) spans 922-932 (NKKKSGKKEKK).

The protein resides in the cell membrane. Its function is as follows. Potential calcium-dependent cell-adhesion protein. May be involved in the establishment and maintenance of specific neuronal connections in the brain. The polypeptide is Protocadherin gamma-A9 (PCDHGA9) (Pan troglodytes (Chimpanzee)).